Here is a 338-residue protein sequence, read N- to C-terminus: Phytanoyl-CoA dioxygenase, peroxisomal (338 aa).

A peroxisome-targeting transit peptide spans Met1–Val30. N6-succinyllysine occurs at positions 59 and 108. Residues Lys120, Met157, His175 to Asp177, and Trp193 contribute to the 2-oxoglutarate site. Fe cation-binding residues include His175 and Asp177. Residues Lys231 and Lys252 each carry the N6-succinyllysine modification. His264 contributes to the Fe cation binding site. Residues Ser266 and Arg275 each contribute to the 2-oxoglutarate site.

The protein belongs to the PhyH family. In terms of assembly, interacts specifically with FKBP52 and PHYHIP. Requires Fe cation as cofactor. The cofactor is L-ascorbate. ATP is required as a cofactor. It depends on Mg(2+) as a cofactor.

The protein resides in the peroxisome. The catalysed reaction is phytanoyl-CoA + 2-oxoglutarate + O2 = 2-hydroxyphytanoyl-CoA + succinate + CO2. The enzyme catalyses 3-methylhexadecanoyl-CoA + 2-oxoglutarate + O2 = 2-hydroxy-3-methylhexadecanoyl-CoA + succinate + CO2. It catalyses the reaction hexadecanoyl-CoA + 2-oxoglutarate + O2 = 2-hydroxyhexadecanoyl-CoA + succinate + CO2. It carries out the reaction octanoyl-CoA + 2-oxoglutarate + O2 = 2-hydroxyoctanoyl-CoA + succinate + CO2. The catalysed reaction is decanoyl-CoA + 2-oxoglutarate + O2 = 2-hydroxydecanoyl-CoA + succinate + CO2. The enzyme catalyses 3-methylbutanoyl-CoA + 2-oxoglutarate + O2 = 2-hydroxy-3-methylbutanoyl-CoA + succinate + CO2. It catalyses the reaction heptadecanoyl-CoA + 2-oxoglutarate + O2 = 2-hydroxyheptadecanoyl-CoA + succinate + CO2. It carries out the reaction eicosanoyl-CoA + 2-oxoglutarate + O2 = 2-hydroxyeicosanoyl-CoA + succinate + CO2. The catalysed reaction is octadecanoyl-CoA + 2-oxoglutarate + O2 = 2-hydroxyoctadecanoyl-CoA + succinate + CO2. The enzyme catalyses dodecanoyl-CoA + 2-oxoglutarate + O2 = 2-hydroxydodecanoyl-CoA + succinate + CO2. It catalyses the reaction tetradecanoyl-CoA + 2-oxoglutarate + O2 = 2-hydroxytetradecanoyl-CoA + succinate + CO2. It carries out the reaction hexanoyl-CoA + 2-oxoglutarate + O2 = 2-hydroxyhexanoyl-CoA + succinate + CO2. The catalysed reaction is butanoyl-CoA + 2-oxoglutarate + O2 = 2-hydroxybutanoyl-CoA + succinate + CO2. The enzyme catalyses 3-methylnonanoyl-CoA + 2-oxoglutarate + O2 = 2-hydroxy-3-methylnonanoyl-CoA + succinate + CO2. It catalyses the reaction 3-methylundecanoyl-CoA + 2-oxoglutarate + O2 = 2-hydroxy-3-methylundecanoyl-CoA + succinate + CO2. It carries out the reaction 3-methyldodecanoyl-CoA + 2-oxoglutarate + O2 = 2-hydroxy-3-methyldodecanoyl-CoA + succinate + CO2. Its pathway is lipid metabolism; fatty acid metabolism. In terms of biological role, catalyzes the 2-hydroxylation of racemic phytanoyl-CoA and the isomers of 3-methylhexadecanoyl-CoA. Shows activity also towards a variety of other mono-branched 3-methylacyl-CoA esters (with a chain length of at least seven carbon atoms) and straight-chain acyl-CoA esters (with a chain length longer than four carbon atoms). Does not hydroxylate long and very long straight chain acyl-CoAs or 2-methyl-and 4-methyl-branched acyl-CoAs. In Rattus norvegicus (Rat), this protein is Phytanoyl-CoA dioxygenase, peroxisomal (Phyh).